We begin with the raw amino-acid sequence, 75 residues long: Brevinin-2SN1 (75 aa).

Positions 1-22 (MFTMKKPLLFLFFLGTISLSFC) are cleaved as a signal peptide. Positions 23–40 (EEERGADEDDEVEMTEEE) are cleaved as a propeptide — removed in mature form. A disulfide bridge links C69 with C75.

The protein belongs to the frog skin active peptide (FSAP) family. Brevinin subfamily. Expressed by the skin glands.

The protein localises to the secreted. Functionally, antimicrobial peptide. Active against some Gram-negative and a variety of Gram-positive bacterial strains. Active against fungus C.glabrata 090902 but not against C.albicans ATCC 10231. Shows hemolytic activity against human erythrocytes. This chain is Brevinin-2SN1, found in Sylvirana spinulosa (Fine-spined frog).